The sequence spans 444 residues: Exodeoxyribonuclease 7 large subunit (444 aa).

This sequence belongs to the XseA family. Heterooligomer composed of large and small subunits.

The protein resides in the cytoplasm. It carries out the reaction Exonucleolytic cleavage in either 5'- to 3'- or 3'- to 5'-direction to yield nucleoside 5'-phosphates.. In terms of biological role, bidirectionally degrades single-stranded DNA into large acid-insoluble oligonucleotides, which are then degraded further into small acid-soluble oligonucleotides. The protein is Exodeoxyribonuclease 7 large subunit of Aliivibrio salmonicida (strain LFI1238) (Vibrio salmonicida (strain LFI1238)).